Reading from the N-terminus, the 447-residue chain is Probable glycine dehydrogenase (decarboxylating) subunit 1 (447 aa).

This sequence belongs to the GcvP family. N-terminal subunit subfamily. The glycine cleavage system is composed of four proteins: P, T, L and H. In this organism, the P 'protein' is a heterodimer of two subunits.

The enzyme catalyses N(6)-[(R)-lipoyl]-L-lysyl-[glycine-cleavage complex H protein] + glycine + H(+) = N(6)-[(R)-S(8)-aminomethyldihydrolipoyl]-L-lysyl-[glycine-cleavage complex H protein] + CO2. Its function is as follows. The glycine cleavage system catalyzes the degradation of glycine. The P protein binds the alpha-amino group of glycine through its pyridoxal phosphate cofactor; CO(2) is released and the remaining methylamine moiety is then transferred to the lipoamide cofactor of the H protein. This is Probable glycine dehydrogenase (decarboxylating) subunit 1 from Bacillus cereus (strain AH187).